A 330-amino-acid chain; its full sequence is D-cysteine desulfhydrase (330 aa).

K52 carries the post-translational modification N6-(pyridoxal phosphate)lysine.

This sequence belongs to the ACC deaminase/D-cysteine desulfhydrase family. As to quaternary structure, homodimer. Requires pyridoxal 5'-phosphate as cofactor.

The enzyme catalyses D-cysteine + H2O = hydrogen sulfide + pyruvate + NH4(+) + H(+). Its function is as follows. Catalyzes the alpha,beta-elimination reaction of D-cysteine and of several D-cysteine derivatives. It could be a defense mechanism against D-cysteine. The protein is D-cysteine desulfhydrase of Yersinia enterocolitica serotype O:8 / biotype 1B (strain NCTC 13174 / 8081).